The chain runs to 366 residues: S-adenosylmethionine:tRNA ribosyltransferase-isomerase (366 aa).

Belongs to the QueA family. In terms of assembly, monomer.

The protein localises to the cytoplasm. The catalysed reaction is 7-aminomethyl-7-carbaguanosine(34) in tRNA + S-adenosyl-L-methionine = epoxyqueuosine(34) in tRNA + adenine + L-methionine + 2 H(+). Its pathway is tRNA modification; tRNA-queuosine biosynthesis. Transfers and isomerizes the ribose moiety from AdoMet to the 7-aminomethyl group of 7-deazaguanine (preQ1-tRNA) to give epoxyqueuosine (oQ-tRNA). The protein is S-adenosylmethionine:tRNA ribosyltransferase-isomerase of Methylorubrum populi (strain ATCC BAA-705 / NCIMB 13946 / BJ001) (Methylobacterium populi).